We begin with the raw amino-acid sequence, 419 residues long: Transcriptional regulator Myc-A (419 aa).

A 9aaTAD motif is present at residues glutamate 78–glycine 86. Disordered regions lie at residues alanine 141–leucine 166, serine 206–proline 274, and asparagine 319–glutamate 344. The segment covering glutamate 226–aspartate 245 has biased composition (acidic residues). Residues threonine 248–serine 261 show a composition bias toward basic and acidic residues. Residues asparagine 319–serine 328 show a composition bias toward polar residues. The bHLH domain maps to aspartate 335–leucine 387. The interval leucine 387–leucine 415 is leucine-zipper.

Efficient DNA binding requires dimerization with another bHLH protein. Binds DNA as a heterodimer with MAX.

The protein localises to the nucleus. In terms of biological role, transcription factor that binds DNA in a non-specific manner, yet also specifically recognizes the core sequence 5'-CAC[GA]TG-3'. Activates the transcription of growth-related genes. This chain is Transcriptional regulator Myc-A (myc-a), found in Xenopus laevis (African clawed frog).